A 1235-amino-acid chain; its full sequence is Serine/threonine-protein kinase TAO2 (1235 aa).

Position 9 is a phosphoserine (Ser-9). The region spanning 28 to 281 (FSDLREIGHG…SEVLLKHRFV (254 aa)) is the Protein kinase domain. ATP-binding positions include 34–42 (IGHGSFGAV) and Lys-57. The Proton acceptor role is filled by Asp-151. At Ser-181 the chain carries Phosphoserine. Residues 318 to 457 (QEAPNGPGAE…TSTTSSARRR (140 aa)) form a disordered region. The span at 350–374 (SSHSVPSMSISASSQSSSVNSLADA) shows a compositional bias: low complexity. A compositionally biased stretch (acidic residues) spans 375–393 (SDNEEEEEEEEEEEEEEEG). Residues 394-409 (PEAREMAMMQEGEHTV) show a composition bias toward basic and acidic residues. Position 414 is a phosphoserine (Ser-414). Coiled-coil stretches lie at residues 486–547 (SALR…RRHQ) and 574–601 (KELA…LQEN). The residue at position 656 (Ser-656) is a Phosphoserine. Positions 681-713 (LRQHEATRELELRQLQAVQRTRAELTRLQHQTE) form a coiled coil. 3 disordered regions span residues 732-777 (HAAQ…QPCS), 804-835 (KEGA…GSLV), and 891-939 (QGPA…RPCP). The segment covering 766-777 (NTGTPIEQQPCS) has biased composition (polar residues). Residues Ser-777, Ser-825, and Ser-827 each carry the phosphoserine modification. A compositionally biased stretch (acidic residues) spans 899 to 908 (PEEEEEEEEG). Residues 924–934 (PDIPPEPPPTH) are compositionally biased toward pro residues. Helical transmembrane passes span 965–985 (LLPL…GGGL) and 987–1007 (AALL…LLLC). Phosphoserine occurs at positions 1011 and 1031. A run of 3 helical transmembrane segments spans residues 1012–1032 (LPSS…VLGL), 1043–1063 (LGLG…LVAM), and 1166–1186 (QGLA…WGLL). A disordered region spans residues 1198-1235 (LPRSQRQLGPPASRQPLPGTLAGRRSRTRQSRALPPWR).

Belongs to the protein kinase superfamily. STE Ser/Thr protein kinase family. STE20 subfamily. In terms of assembly, interacts with MAP2K3 and MAP2K6. Self-associates. Interacts with tubulins through the C-terminal domain. Interacts with MAP3K7 and interferes with MAP3K7-binding to CHUK and thus prevents NF-kappa-B activation. Isoform 2 interacts with PCDH8; this complex may also include CDH2. Mg(2+) is required as a cofactor. Isoforms 1 and 2 are autophosphorylated. Post-translationally, C-terminal cleavage of isoform 1 and subsequent nuclear localization requires CASP9 activity. In terms of processing, autophosphorylated. Phosphorylated by ATM. Phosphorylated on Ser-1031 by MAPK14. This phosphorylation is required PCDH8 for endocytosis. Ubiquitously expressed, with a higher level of expression in testis and brain.

Its subcellular location is the cytoplasmic vesicle membrane. It is found in the cytoplasm. The protein localises to the cytoskeleton. The protein resides in the nucleus. It localises to the cell projection. Its subcellular location is the dendrite. The catalysed reaction is L-seryl-[protein] + ATP = O-phospho-L-seryl-[protein] + ADP + H(+). It carries out the reaction L-threonyl-[protein] + ATP = O-phospho-L-threonyl-[protein] + ADP + H(+). Selectively inhibited by the enantiopure organoruthenium inhibitor 9E1. Activated following arsenic trioxide (As(2)O(3)) treatment. Serine/threonine-protein kinase involved in different processes such as membrane blebbing and apoptotic bodies formation DNA damage response and MAPK14/p38 MAPK stress-activated MAPK cascade. Phosphorylates itself, MBP, activated MAPK8, MAP2K3, MAP2K6 and tubulins. Activates the MAPK14/p38 MAPK signaling pathway through the specific activation and phosphorylation of the upstream MAP2K3 and MAP2K6 kinases. In response to DNA damage, involved in the G2/M transition DNA damage checkpoint by activating the p38/MAPK14 stress-activated MAPK cascade, probably by mediating phosphorylation of upstream MAP2K3 and MAP2K6 kinases. Isoform 1, but not isoform 2, plays a role in apoptotic morphological changes, including cell contraction, membrane blebbing and apoptotic bodies formation. This function, which requires the activation of MAPK8/JNK and nuclear localization of C-terminally truncated isoform 1, may be linked to the mitochondrial CASP9-associated death pathway. Isoform 1 binds to microtubules and affects their organization and stability independently of its kinase activity. Prevents MAP3K7-mediated activation of CHUK, and thus NF-kappa-B activation, but not that of MAPK8/JNK. May play a role in the osmotic stress-MAPK8 pathway. Isoform 2, but not isoform 1, is required for PCDH8 endocytosis. Following homophilic interactions between PCDH8 extracellular domains, isoform 2 phosphorylates and activates MAPK14/p38 MAPK which in turn phosphorylates isoform 2. This process leads to PCDH8 endocytosis and CDH2 cointernalization. Both isoforms are involved in MAPK14 phosphorylation. This chain is Serine/threonine-protein kinase TAO2 (TAOK2), found in Homo sapiens (Human).